We begin with the raw amino-acid sequence, 34 residues long: Photosystem II reaction center protein M (34 aa).

The helical transmembrane segment at 7–27 (GFLATLLFVAVPMLFLIGLYI) threads the bilayer.

This sequence belongs to the PsbM family. As to quaternary structure, PSII is composed of 1 copy each of membrane proteins PsbA, PsbB, PsbC, PsbD, PsbE, PsbF, PsbH, PsbI, PsbJ, PsbK, PsbL, PsbM, PsbT, PsbX, PsbY, Psb30/Ycf12, peripheral proteins PsbO, CyanoQ (PsbQ), PsbU, PsbV and a large number of cofactors. It forms dimeric complexes.

The protein localises to the cellular thylakoid membrane. In terms of biological role, one of the components of the core complex of photosystem II (PSII). PSII is a light-driven water:plastoquinone oxidoreductase that uses light energy to abstract electrons from H(2)O, generating O(2) and a proton gradient subsequently used for ATP formation. It consists of a core antenna complex that captures photons, and an electron transfer chain that converts photonic excitation into a charge separation. This subunit is found at the monomer-monomer interface. In Prochlorococcus marinus (strain MIT 9303), this protein is Photosystem II reaction center protein M.